A 382-amino-acid chain; its full sequence is Chaperone protein DnaJ 1 (382 aa).

In terms of domain architecture, J spans Asp4 to Gly68. Residues Gly134–Arg216 form a CR-type zinc finger. Zn(2+)-binding residues include Cys147, Cys150, Cys164, Cys167, Cys190, Cys193, Cys204, and Cys207. CXXCXGXG motif repeat units lie at residues Cys147–Gly154, Cys164–Gly171, Cys190–Gly197, and Cys204–Gly211.

The protein belongs to the DnaJ family. As to quaternary structure, homodimer. Zn(2+) is required as a cofactor.

The protein localises to the cytoplasm. Participates actively in the response to hyperosmotic and heat shock by preventing the aggregation of stress-denatured proteins and by disaggregating proteins, also in an autonomous, DnaK-independent fashion. Unfolded proteins bind initially to DnaJ; upon interaction with the DnaJ-bound protein, DnaK hydrolyzes its bound ATP, resulting in the formation of a stable complex. GrpE releases ADP from DnaK; ATP binding to DnaK triggers the release of the substrate protein, thus completing the reaction cycle. Several rounds of ATP-dependent interactions between DnaJ, DnaK and GrpE are required for fully efficient folding. Also involved, together with DnaK and GrpE, in the DNA replication of plasmids through activation of initiation proteins. The polypeptide is Chaperone protein DnaJ 1 (Corynebacterium glutamicum (strain ATCC 13032 / DSM 20300 / JCM 1318 / BCRC 11384 / CCUG 27702 / LMG 3730 / NBRC 12168 / NCIMB 10025 / NRRL B-2784 / 534)).